We begin with the raw amino-acid sequence, 189 residues long: Calcium and integrin-binding family member 2 (189 aa).

3 consecutive EF-hand domains span residues 68-103, 105-140, and 146-181; these read RENP…FSEQ, PRDI…MTKN, and EHQQ…APDF. Asp118, Asp120, Asp122, Asp129, Asp159, Asp161, Asp163, Lys165, and Glu170 together coordinate Ca(2+).

As to quaternary structure, monomer. Homodimer.

The protein resides in the cytoplasm. In terms of biological role, calcium- and integrin-binding protein. Plays a role in intracellular calcium homeostasis. Critical for proper photoreceptor cell maintenance and function. Required for prevention of light-dependent retinal degeneration. The protein is Calcium and integrin-binding family member 2 of Drosophila melanogaster (Fruit fly).